A 115-amino-acid chain; its full sequence is NAD(P)H-quinone oxidoreductase subunit M (115 aa).

It belongs to the complex I NdhM subunit family. In terms of assembly, NDH-1 can be composed of about 15 different subunits; different subcomplexes with different compositions have been identified which probably have different functions.

It is found in the cellular thylakoid membrane. The catalysed reaction is a plastoquinone + NADH + (n+1) H(+)(in) = a plastoquinol + NAD(+) + n H(+)(out). The enzyme catalyses a plastoquinone + NADPH + (n+1) H(+)(in) = a plastoquinol + NADP(+) + n H(+)(out). NDH-1 shuttles electrons from an unknown electron donor, via FMN and iron-sulfur (Fe-S) centers, to quinones in the respiratory and/or the photosynthetic chain. The immediate electron acceptor for the enzyme in this species is believed to be plastoquinone. Couples the redox reaction to proton translocation, and thus conserves the redox energy in a proton gradient. Cyanobacterial NDH-1 also plays a role in inorganic carbon-concentration. The polypeptide is NAD(P)H-quinone oxidoreductase subunit M (Prochlorococcus marinus (strain NATL2A)).